The sequence spans 967 residues: Isoleucine--tRNA ligase 2 (967 aa).

A 'HIGH' region motif is present at residues 58-68; the sequence is PYANGDIHIGH. Positions 430–463 are disordered; the sequence is EADPGRADVTEEAGATGEARKVGKAEEAEEAGPV. Residue E598 participates in L-isoleucyl-5'-AMP binding. The short motif at 639–643 is the 'KMSKS' region element; sequence KMSKS. K642 serves as a coordination point for ATP. Positions 922, 925, 942, and 945 each coordinate Zn(2+).

Belongs to the class-I aminoacyl-tRNA synthetase family. IleS type 1 subfamily. As to quaternary structure, monomer. Requires Zn(2+) as cofactor.

The protein localises to the cytoplasm. It catalyses the reaction tRNA(Ile) + L-isoleucine + ATP = L-isoleucyl-tRNA(Ile) + AMP + diphosphate. In terms of biological role, catalyzes the attachment of isoleucine to tRNA(Ile). As IleRS can inadvertently accommodate and process structurally similar amino acids such as valine, to avoid such errors it has two additional distinct tRNA(Ile)-dependent editing activities. One activity is designated as 'pretransfer' editing and involves the hydrolysis of activated Val-AMP. The other activity is designated 'posttransfer' editing and involves deacylation of mischarged Val-tRNA(Ile). This is Isoleucine--tRNA ligase 2 from Burkholderia pseudomallei (strain K96243).